Consider the following 240-residue polypeptide: Pyridoxine 5'-phosphate synthase (240 aa).

Asparagine 6 lines the 3-amino-2-oxopropyl phosphate pocket. 8–9 (DH) is a binding site for 1-deoxy-D-xylulose 5-phosphate. Residue arginine 17 coordinates 3-amino-2-oxopropyl phosphate. Catalysis depends on histidine 42, which acts as the Proton acceptor. Residues arginine 44 and histidine 49 each coordinate 1-deoxy-D-xylulose 5-phosphate. The active-site Proton acceptor is glutamate 69. Threonine 99 contributes to the 1-deoxy-D-xylulose 5-phosphate binding site. Histidine 190 serves as the catalytic Proton donor. Residues glycine 191 and 212 to 213 (GH) each bind 3-amino-2-oxopropyl phosphate.

Belongs to the PNP synthase family. In terms of assembly, homooctamer; tetramer of dimers.

The protein resides in the cytoplasm. The catalysed reaction is 3-amino-2-oxopropyl phosphate + 1-deoxy-D-xylulose 5-phosphate = pyridoxine 5'-phosphate + phosphate + 2 H2O + H(+). Its pathway is cofactor biosynthesis; pyridoxine 5'-phosphate biosynthesis; pyridoxine 5'-phosphate from D-erythrose 4-phosphate: step 5/5. Catalyzes the complicated ring closure reaction between the two acyclic compounds 1-deoxy-D-xylulose-5-phosphate (DXP) and 3-amino-2-oxopropyl phosphate (1-amino-acetone-3-phosphate or AAP) to form pyridoxine 5'-phosphate (PNP) and inorganic phosphate. The chain is Pyridoxine 5'-phosphate synthase from Pseudomonas entomophila (strain L48).